The sequence spans 308 residues: UDP-N-acetylenolpyruvoylglucosamine reductase (308 aa).

The FAD-binding PCMH-type domain occupies 32 to 196 (VGGPAARLYK…ISAKLQLSPG (165 aa)). R176 is an active-site residue. The Proton donor role is filled by S225. Residue E296 is part of the active site.

Belongs to the MurB family. The cofactor is FAD.

The protein localises to the cytoplasm. The catalysed reaction is UDP-N-acetyl-alpha-D-muramate + NADP(+) = UDP-N-acetyl-3-O-(1-carboxyvinyl)-alpha-D-glucosamine + NADPH + H(+). Its pathway is cell wall biogenesis; peptidoglycan biosynthesis. Functionally, cell wall formation. The polypeptide is UDP-N-acetylenolpyruvoylglucosamine reductase (Legionella pneumophila (strain Corby)).